Here is a 230-residue protein sequence, read N- to C-terminus: Cytochrome c oxidase subunit 2 (230 aa).

At 1–14 (MAHPSQLGFQDAAS) the chain is on the mitochondrial intermembrane side. Residues 15 to 45 (PVMEELIHFHDHTLMIVFLISTLVLYIITAM) traverse the membrane as a helical segment. Residues 46-59 (VSTKLTNKYILDSQ) lie on the Mitochondrial matrix side of the membrane. The chain crosses the membrane as a helical span at residues 60–87 (EIEIVWTILPAIILIMIALPSLRILYLM). Residues 88–230 (DEINDPHLTI…TWSSLMLEEA (143 aa)) lie on the Mitochondrial intermembrane side of the membrane. Positions 161, 196, 198, 200, 204, and 207 each coordinate Cu cation. Glutamate 198 provides a ligand contact to Mg(2+).

Belongs to the cytochrome c oxidase subunit 2 family. Component of the cytochrome c oxidase (complex IV, CIV), a multisubunit enzyme composed of 14 subunits. The complex is composed of a catalytic core of 3 subunits MT-CO1, MT-CO2 and MT-CO3, encoded in the mitochondrial DNA, and 11 supernumerary subunits COX4I, COX5A, COX5B, COX6A, COX6B, COX6C, COX7A, COX7B, COX7C, COX8 and NDUFA4, which are encoded in the nuclear genome. The complex exists as a monomer or a dimer and forms supercomplexes (SCs) in the inner mitochondrial membrane with NADH-ubiquinone oxidoreductase (complex I, CI) and ubiquinol-cytochrome c oxidoreductase (cytochrome b-c1 complex, complex III, CIII), resulting in different assemblies (supercomplex SCI(1)III(2)IV(1) and megacomplex MCI(2)III(2)IV(2)). Found in a complex with TMEM177, COA6, COX18, COX20, SCO1 and SCO2. Interacts with TMEM177 in a COX20-dependent manner. Interacts with COX20. Interacts with COX16. Requires Cu cation as cofactor.

Its subcellular location is the mitochondrion inner membrane. The enzyme catalyses 4 Fe(II)-[cytochrome c] + O2 + 8 H(+)(in) = 4 Fe(III)-[cytochrome c] + 2 H2O + 4 H(+)(out). In terms of biological role, component of the cytochrome c oxidase, the last enzyme in the mitochondrial electron transport chain which drives oxidative phosphorylation. The respiratory chain contains 3 multisubunit complexes succinate dehydrogenase (complex II, CII), ubiquinol-cytochrome c oxidoreductase (cytochrome b-c1 complex, complex III, CIII) and cytochrome c oxidase (complex IV, CIV), that cooperate to transfer electrons derived from NADH and succinate to molecular oxygen, creating an electrochemical gradient over the inner membrane that drives transmembrane transport and the ATP synthase. Cytochrome c oxidase is the component of the respiratory chain that catalyzes the reduction of oxygen to water. Electrons originating from reduced cytochrome c in the intermembrane space (IMS) are transferred via the dinuclear copper A center (CU(A)) of subunit 2 and heme A of subunit 1 to the active site in subunit 1, a binuclear center (BNC) formed by heme A3 and copper B (CU(B)). The BNC reduces molecular oxygen to 2 water molecules using 4 electrons from cytochrome c in the IMS and 4 protons from the mitochondrial matrix. The chain is Cytochrome c oxidase subunit 2 (MT-CO2) from Scyliorhinus canicula (Small-spotted catshark).